An 86-amino-acid polypeptide reads, in one-letter code: High affinity immunoglobulin epsilon receptor subunit gamma (86 aa).

A signal peptide spans Met1–Ala18. The Extracellular segment spans residues Leu19–Gln23. The helical transmembrane segment at Leu24–Cys44 threads the bilayer. Residues Arg45–Gln86 lie on the Cytoplasmic side of the membrane. Residues Ala54–Glu82 form the ITAM domain. Tyr65 is modified (phosphotyrosine). The residue at position 69 (Ser69) is a Phosphoserine. A Phosphotyrosine modification is found at Tyr76. At Thr78 the chain carries Phosphothreonine.

Belongs to the CD3Z/FCER1G family. In terms of assembly, igE Fc receptor is a tetramer of an alpha chain, a beta chain, and two disulfide linked gamma chains. Associates with FCGR1A; forms a functional signaling complex. The signaling subunit of immunoglobulin gamma (IgG) Fc receptor complex. As a homodimer or a heterodimer of CD247 and FCER1G, associates with the ligand binding subunit FCGR3A to form a functional receptor complex. Associates with CLEC6A. Interacts with CLEC4E. Interacts (via ITAM domain) with SYK (via SH2 domains); activates SYK, enabling integrin-mediated activation of neutrophils and macrophages. Interacts with CSF2RB and recruits SYK in response to IL3 stimulation; this interaction is direct. Interacts with CD300LH; the interaction may be indirect. Interacts with CD300LD. Interacts with TARM1.

The protein localises to the cell membrane. In terms of biological role, adapter protein containing an immunoreceptor tyrosine-based activation motif (ITAM) that transduces activation signals from various immunoreceptors. As a component of the high-affinity immunoglobulin E (IgE) receptor, mediates allergic inflammatory signaling in mast cells. As a constitutive component of interleukin-3 receptor complex, selectively mediates interleukin 4/IL4 production by basophils priming T-cells toward effector T-helper 2 subset. Associates with pattern recognition receptors CLEC4D and CLEC4E to form a functional signaling complex in myeloid cells. Binding of mycobacterial trehalose 6,6'-dimycolate (TDM) to this receptor complex leads to phosphorylation of ITAM, triggering activation of SYK, CARD9 and NF-kappa-B, consequently driving maturation of antigen-presenting cells and shaping antigen-specific priming of T-cells toward effector T-helper 1 and T-helper 17 cell subtypes. May function cooperatively with other activating receptors. Functionally linked to integrin beta-2/ITGB2-mediated neutrophil activation. Also involved in integrin alpha-2/ITGA2-mediated platelet activation. This chain is High affinity immunoglobulin epsilon receptor subunit gamma (FCER1G), found in Macaca fascicularis (Crab-eating macaque).